The primary structure comprises 412 residues: [Pyruvate dehydrogenase (acetyl-transferring)] kinase isozyme 4, mitochondrial (412 aa).

In terms of domain architecture, Histidine kinase spans 138 to 368 (ILEYKDTCTV…DAIIYLKALS (231 aa)). ATP-binding positions include 254–261 (ELFKNAMR), Asp293, 312–313 (ST), and 329–334 (GFGYGL).

This sequence belongs to the PDK/BCKDK protein kinase family. In terms of assembly, homodimer. Interacts with the pyruvate dehydrogenase complex subunit DLAT, and is part of the multimeric pyruvate dehydrogenase complex that contains multiple copies of pyruvate dehydrogenase (E1), dihydrolipoamide acetyltransferase (DLAT, E2) and lipoamide dehydrogenase (DLD, E3). Detected in skeletal muscle and heart.

It localises to the mitochondrion matrix. The enzyme catalyses L-seryl-[pyruvate dehydrogenase E1 alpha subunit] + ATP = O-phospho-L-seryl-[pyruvate dehydrogenase E1 alpha subunit] + ADP + H(+). Kinase that plays a key role in regulation of glucose and fatty acid metabolism and homeostasis via phosphorylation of the pyruvate dehydrogenase subunits PDHA1 and PDHA2. This inhibits pyruvate dehydrogenase activity, and thereby regulates metabolite flux through the tricarboxylic acid cycle, down-regulates aerobic respiration and inhibits the formation of acetyl-coenzyme A from pyruvate. Inhibition of pyruvate dehydrogenase decreases glucose utilization and increases fat metabolism in response to prolonged fasting and starvation. Plays an important role in maintaining normal blood glucose levels under starvation, and is involved in the insulin signaling cascade. Via its regulation of pyruvate dehydrogenase activity, plays an important role in maintaining normal blood pH and in preventing the accumulation of ketone bodies under starvation. In the fed state, mediates cellular responses to glucose levels and to a high-fat diet. Regulates both fatty acid oxidation and de novo fatty acid biosynthesis. Plays a role in the generation of reactive oxygen species. Protects detached epithelial cells against anoikis. Plays a role in cell proliferation via its role in regulating carbohydrate and fatty acid metabolism. This chain is [Pyruvate dehydrogenase (acetyl-transferring)] kinase isozyme 4, mitochondrial (PDK4), found in Ictidomys tridecemlineatus (Thirteen-lined ground squirrel).